Consider the following 203-residue polypeptide: Urease accessory protein UreE (203 aa).

Residues 170 to 203 (EHHGHSHSHSHSHSHDHDHQHGPSCSHGHHHGHR) form a disordered region.

Belongs to the UreE family.

It localises to the cytoplasm. Its function is as follows. Involved in urease metallocenter assembly. Binds nickel. Probably functions as a nickel donor during metallocenter assembly. The sequence is that of Urease accessory protein UreE from Burkholderia mallei (strain SAVP1).